The sequence spans 92 residues: Cytochrome c2 (92 aa).

Residues cysteine 12, cysteine 15, histidine 16, and methionine 66 each contribute to the heme c site.

This sequence belongs to the cytochrome c family. Post-translationally, binds 1 heme c group covalently per subunit.

Functionally, cytochrome c2 is found mainly in purple, non-sulfur, photosynthetic bacteria where it functions as the electron donor to the oxidized bacteriochlorophyll in the photophosphorylation pathway. However, it may also have a role in the respiratory chain and is found in some non-photosynthetic bacteria. The sequence is that of Cytochrome c2 from Rhodocyclus tenuis (Rhodospirillum tenue).